The chain runs to 438 residues: Dolichyl-diphosphooligosaccharide--protein glycosyltransferase 48 kDa subunit (438 aa).

An N-terminal signal peptide occupies residues 1–25; sequence MASLRLSVLLVSVSWLLLLVSGLRA. At 26–408 the chain is on the lumenal side; it reads GPRTLVLMEN…QYERFIPSAY (383 aa). Residues 409-429 form a helical membrane-spanning segment; it reads PYYASAFSVMFGLFIFSIVFL. Residues 430-438 are Cytoplasmic-facing; that stretch reads HMKEKEKSD.

Belongs to the DDOST 48 kDa subunit family. Component of the oligosaccharyltransferase (OST) complex.

The protein resides in the endoplasmic reticulum membrane. Its pathway is protein modification; protein glycosylation. In terms of biological role, subunit of the oligosaccharyl transferase (OST) complex that catalyzes the initial transfer of a defined glycan (Glc(3)Man(9)GlcNAc(2) in eukaryotes) from the lipid carrier dolichol-pyrophosphate to an asparagine residue within an Asn-X-Ser/Thr consensus motif in nascent polypeptide chains, the first step in protein N-glycosylation. N-glycosylation occurs cotranslationally and the complex associates with the Sec61 complex at the channel-forming translocon complex that mediates protein translocation across the endoplasmic reticulum (ER). All subunits are required for a maximal enzyme activity. Required for the assembly of both SST3A- and SS3B-containing OST complexes. This is Dolichyl-diphosphooligosaccharide--protein glycosyltransferase 48 kDa subunit from Xenopus laevis (African clawed frog).